The chain runs to 133 residues: S-protein homolog 9 (133 aa).

The signal sequence occupies residues 1–20 (MNRLSCFLLVIGLCIGLSNA).

This sequence belongs to the plant self-incompatibility (S1) protein family.

The protein resides in the secreted. This Arabidopsis thaliana (Mouse-ear cress) protein is S-protein homolog 9.